A 466-amino-acid chain; its full sequence is 55 kDa erythrocyte membrane protein (466 aa).

The residue at position 2 (Thr-2) is an N-acetylthreonine. Phosphoserine is present on residues Ser-13 and Ser-19. A Phosphothreonine modification is found at Thr-49. 3 positions are modified to phosphoserine: Ser-52, Ser-57, and Ser-110. Residues 71–152 form the PDZ domain; that stretch reads LIQIEKVTEE…MISLKVIPNQ (82 aa). The SH3 domain maps to 158 to 228; that stretch reads ALQMFMRAQF…PSPELQEWRV (71 aa). A Phosphoserine modification is found at Ser-243. The tract at residues 268-466 is interaction with PALS1; it reads VVSYEEVVRL…PQWVPVSWVY (199 aa). One can recognise a Guanylate kinase-like domain in the interval 282–451; sequence RKTLVLIGAS…TLKKLQEAFD (170 aa).

Belongs to the MAGUK family. In terms of assembly, heterodimer with PALS1. Interacts with DLG5 and NF2. Interacts (via guanylate kinase-like domain) with WHRN (via third PDZ domain). Palmitoylated.

It is found in the cell membrane. It localises to the cell projection. The protein resides in the stereocilium. Its function is as follows. Essential regulator of neutrophil polarity. Regulates neutrophil polarization by regulating AKT1 phosphorylation through a mechanism that is independent of PIK3CG activity. In Papio anubis (Olive baboon), this protein is 55 kDa erythrocyte membrane protein (MPP1).